The sequence spans 432 residues: Tyrosine-protein phosphatase non-receptor type 1 (432 aa).

Residue M1 is modified to N-acetylmethionine. The 275-residue stretch at 3 to 277 (MEKEFEQIDK…RFSYLAVIEG (275 aa)) folds into the Tyrosine-protein phosphatase domain. Y20 is subject to Phosphotyrosine. S50 carries the post-translational modification Phosphoserine; by PKB/AKT1, CLK1 and CLK2. Y66 is subject to Phosphotyrosine; by EGFR. Substrate is bound by residues D181 and 215-221 (CSAGIGR). The active-site Phosphocysteine intermediate is C215. C215 is modified (cysteine persulfide). C215 is modified (S-nitrosocysteine; in reversibly inhibited form). 2 positions are modified to phosphoserine; by CLK1 and CLK2: S242 and S243. Q262 provides a ligand contact to substrate. Residues 297–322 (EDLEPPPEHVPPPPRPPKRTLEPHNG) are disordered. Phosphoserine occurs at positions 335, 362, and 364. The tract at residues 350–402 (SRAPSIAVHSMSSMSQDTEVRKRMVGGGLQSAQASVPTEEELSPTEEEQKAHR) is disordered. T367 is subject to Phosphothreonine.

The protein belongs to the protein-tyrosine phosphatase family. Non-receptor class 1 subfamily. In terms of assembly, interacts with EPHA3 (phosphorylated); dephosphorylates EPHA3 and may regulate its trafficking and function. Interacts with MET. Interacts with NCK1. Ser-50 is the major site of phosphorylation as compared to Ser-242 and Ser-243. Activated by phosphorylation at Ser-50. In terms of processing, S-nitrosylation of Cys-215 inactivates the enzyme activity. Post-translationally, sulfhydration at Cys-215 following endoplasmic reticulum stress inactivates the enzyme activity, promoting EIF2AK3/PERK activity. In terms of tissue distribution, found in several tissues including central nervous system, liver and kidney. A high level of expression was found in the hippocampus.

The protein resides in the endoplasmic reticulum membrane. It catalyses the reaction O-phospho-L-tyrosyl-[protein] + H2O = L-tyrosyl-[protein] + phosphate. Its function is as follows. Tyrosine-protein phosphatase which acts as a regulator of endoplasmic reticulum unfolded protein response. Mediates dephosphorylation of EIF2AK3/PERK; inactivating the protein kinase activity of EIF2AK3/PERK. May play an important role in CKII- and p60c-src-induced signal transduction cascades. May regulate the EFNA5-EPHA3 signaling pathway which modulates cell reorganization and cell-cell repulsion. May also regulate the hepatocyte growth factor receptor signaling pathway through dephosphorylation of MET. This chain is Tyrosine-protein phosphatase non-receptor type 1 (Ptpn1), found in Rattus norvegicus (Rat).